A 466-amino-acid polypeptide reads, in one-letter code: CBL-interacting protein kinase 20 (466 aa).

In terms of domain architecture, Protein kinase spans 12-276 (YELGRSLGHG…IDELVKHPWF (265 aa)). Residues 18-26 (LGHGTFSKV) and Lys41 each bind ATP. Asp139 (proton acceptor) is an active-site residue. Residues 162–191 (DFGLSALSASRRHDGLLHTTCGTPSYVAPE) form an activation loop region. Residues 297–329 (KPANAAMNMKPASLNAFDIISLSQGFDLSGMFC) form the NAF domain. The interval 337–366 (TQDQLFVTGKPATAIVSRLEEIAETEHFTV) is PPI. The interval 446 to 466 (ASEKNQLPAVSEVSPLSSPRN) is disordered.

The protein belongs to the protein kinase superfamily. CAMK Ser/Thr protein kinase family. SNF1 subfamily. Mn(2+) serves as cofactor.

It carries out the reaction L-seryl-[protein] + ATP = O-phospho-L-seryl-[protein] + ADP + H(+). It catalyses the reaction L-threonyl-[protein] + ATP = O-phospho-L-threonyl-[protein] + ADP + H(+). Its function is as follows. CIPK serine-threonine protein kinases interact with CBL proteins. Binding of a CBL protein to the regulatory NAF domain of CIPK protein lead to the activation of the kinase in a calcium-dependent manner. In Oryza sativa subsp. japonica (Rice), this protein is CBL-interacting protein kinase 20 (CIPK20).